A 149-amino-acid polypeptide reads, in one-letter code: FKBP-type 16 kDa peptidyl-prolyl cis-trans isomerase (149 aa).

The PPIase FKBP-type domain occupies 2 to 72; the sequence is SESVQSNSAV…FSLEPDAAFG (71 aa).

It belongs to the FKBP-type PPIase family.

It catalyses the reaction [protein]-peptidylproline (omega=180) = [protein]-peptidylproline (omega=0). PPIases accelerate the folding of proteins. Substrate specificity carried out with 'Suc-Ala-Xaa-Pro-Phe-4-nitroanilide', where Xaa is the amino acid tested, was found to be Phe &gt; Leu &gt;&gt; Ile &gt; Lys = Ala &gt; Trp &gt; His &gt;&gt; Gln. In Escherichia coli O6:H1 (strain CFT073 / ATCC 700928 / UPEC), this protein is FKBP-type 16 kDa peptidyl-prolyl cis-trans isomerase (fkpB).